We begin with the raw amino-acid sequence, 313 residues long: Pseudouridine-5'-phosphate glycosidase (313 aa).

The active-site Proton donor is the glutamate 26. Residues lysine 87 and alanine 107 each coordinate substrate. Aspartate 139 is a Mn(2+) binding site. 141-143 (SAD) contributes to the substrate binding site. Residue lysine 160 is the Nucleophile of the active site.

The protein belongs to the pseudouridine-5'-phosphate glycosidase family. In terms of assembly, homotrimer. Mn(2+) serves as cofactor.

The enzyme catalyses D-ribose 5-phosphate + uracil = psi-UMP + H2O. In terms of biological role, catalyzes the reversible cleavage of pseudouridine 5'-phosphate (PsiMP) to ribose 5-phosphate and uracil. Functions biologically in the cleavage direction, as part of a pseudouridine degradation pathway. This Corynebacterium aurimucosum (strain ATCC 700975 / DSM 44827 / CIP 107346 / CN-1) (Corynebacterium nigricans) protein is Pseudouridine-5'-phosphate glycosidase.